We begin with the raw amino-acid sequence, 406 residues long: Tyrosine--tRNA ligase (406 aa).

Tyrosine 35 serves as a coordination point for L-tyrosine. Positions 40 to 49 (PTADSLHIGH) match the 'HIGH' region motif. 2 residues coordinate L-tyrosine: tyrosine 168 and glutamine 172. A 'KMSKS' region motif is present at residues 228–232 (KMGKT). Residue lysine 231 participates in ATP binding. The S4 RNA-binding domain maps to 340-406 (CSVVELLVDI…KKNYNRIIIK (67 aa)).

The protein belongs to the class-I aminoacyl-tRNA synthetase family. TyrS type 1 subfamily. Homodimer.

It is found in the cytoplasm. It carries out the reaction tRNA(Tyr) + L-tyrosine + ATP = L-tyrosyl-tRNA(Tyr) + AMP + diphosphate + H(+). Functionally, catalyzes the attachment of tyrosine to tRNA(Tyr) in a two-step reaction: tyrosine is first activated by ATP to form Tyr-AMP and then transferred to the acceptor end of tRNA(Tyr). The sequence is that of Tyrosine--tRNA ligase from Clostridium kluyveri (strain NBRC 12016).